The chain runs to 96 residues: Small ribosomal subunit protein bS6 (96 aa).

It belongs to the bacterial ribosomal protein bS6 family.

Binds together with bS18 to 16S ribosomal RNA. This Streptococcus thermophilus (strain ATCC BAA-250 / LMG 18311) protein is Small ribosomal subunit protein bS6.